The primary structure comprises 338 residues: Lipoate-protein ligase A (338 aa).

The BPL/LPL catalytic domain occupies 29-216 (PATQRVLFLW…AFFAHYGERV (188 aa)). ATP-binding positions include Arg71, 76–79 (GAVF), and Lys134. Lys134 contributes to the (R)-lipoate binding site.

It belongs to the LplA family. As to quaternary structure, monomer.

It is found in the cytoplasm. It carries out the reaction L-lysyl-[lipoyl-carrier protein] + (R)-lipoate + ATP = N(6)-[(R)-lipoyl]-L-lysyl-[lipoyl-carrier protein] + AMP + diphosphate + H(+). Its pathway is protein modification; protein lipoylation via exogenous pathway; protein N(6)-(lipoyl)lysine from lipoate: step 1/2. It functions in the pathway protein modification; protein lipoylation via exogenous pathway; protein N(6)-(lipoyl)lysine from lipoate: step 2/2. In terms of biological role, catalyzes both the ATP-dependent activation of exogenously supplied lipoate to lipoyl-AMP and the transfer of the activated lipoyl onto the lipoyl domains of lipoate-dependent enzymes. The polypeptide is Lipoate-protein ligase A (Escherichia coli (strain 55989 / EAEC)).